We begin with the raw amino-acid sequence, 475 residues long: Adenosylhomocysteinase (475 aa).

Residues T66, D141, and E201 each contribute to the substrate site. NAD(+) is bound at residue 202-204 (TTT). Substrate is bound by residues K231 and D235. Residues N236, 265 to 270 (GYGEVG), E288, N323, 344 to 346 (IGH), and N389 each bind NAD(+).

The protein belongs to the adenosylhomocysteinase family. NAD(+) serves as cofactor.

The protein localises to the cytoplasm. The catalysed reaction is S-adenosyl-L-homocysteine + H2O = L-homocysteine + adenosine. The protein operates within amino-acid biosynthesis; L-homocysteine biosynthesis; L-homocysteine from S-adenosyl-L-homocysteine: step 1/1. Its function is as follows. May play a key role in the regulation of the intracellular concentration of adenosylhomocysteine. The polypeptide is Adenosylhomocysteinase (Geobacter sulfurreducens (strain ATCC 51573 / DSM 12127 / PCA)).